The following is a 423-amino-acid chain: MFS-type transporter phiL (423 aa).

3 helical membrane passes run 25–45, 82–102, and 111–131; these read IFCF…NSFI, IGLA…LGGV, and YIFV…IIFF. Asparagine 141 and asparagine 151 each carry an N-linked (GlcNAc...) asparagine glycan. The disordered stretch occupies residues 166 to 185; sequence DHASGRNLPNAGSKKSNPRN. 4 consecutive transmembrane segments (helical) span residues 203 to 223, 238 to 258, 298 to 318, and 321 to 341; these read VIIF…SLSY, LSYI…GFVV, IAVP…WTMS, and LPPI…TAAY. An N-linked (GlcNAc...) asparagine glycan is attached at asparagine 352. The next 2 membrane-spanning stretches (helical) occupy residues 369 to 389 and 390 to 410; these read LLGA…GMGW and TFTA…FLLF.

The protein belongs to the major facilitator superfamily. CAR1 family.

It localises to the membrane. Functionally, MFS-type transporter; part of the gene cluster that mediates the biosynthesis of the antihypercholesterolemic agents phomoidrides which are dimeric anhydrides. This chain is MFS-type transporter phiL, found in Fungal sp. (strain ATCC 74256).